Here is a 284-residue protein sequence, read N- to C-terminus: Deoxyribonuclease-1 (284 aa).

Residues 1-22 (MRAARLMGALLALAGLLQLALS) form the signal peptide. Asn40 carries N-linked (GlcNAc...) asparagine glycosylation. Glu100 is an active-site residue. A disulfide bond links Cys123 and Cys126. The N-linked (GlcNAc...) asparagine glycan is linked to Asn128. Residue His156 is part of the active site. Residues Cys195 and Cys231 are joined by a disulfide bond.

Belongs to the DNase I family. Ca(2+) serves as cofactor. Mg(2+) is required as a cofactor.

The protein localises to the secreted. It localises to the zymogen granule. The protein resides in the nucleus envelope. The catalysed reaction is Endonucleolytic cleavage to 5'-phosphodinucleotide and 5'-phosphooligonucleotide end-products.. Functionally, serum endocuclease secreted into body fluids by a wide variety of exocrine and endocrine organs. Expressed by non-hematopoietic tissues and preferentially cleaves protein-free DNA. Among other functions, seems to be involved in cell death by apoptosis. Binds specifically to G-actin and blocks actin polymerization. Together with DNASE1L3, plays a key role in degrading neutrophil extracellular traps (NETs). NETs are mainly composed of DNA fibers and are released by neutrophils to bind pathogens during inflammation. Degradation of intravascular NETs by DNASE1 and DNASE1L3 is required to prevent formation of clots that obstruct blood vessels and cause organ damage following inflammation. The sequence is that of Deoxyribonuclease-1 (DNASE1) from Sus scrofa (Pig).